A 926-amino-acid chain; its full sequence is Tyrosine-protein phosphatase non-receptor type 4 (926 aa).

Residues 29 to 312 (VVCNILLLDN…EHHTFFRLDR (284 aa)) form the FERM domain. Disordered regions lie at residues 380-412 (DDRL…TRLR) and 430-475 (EVFV…KNSW). Composition is skewed to polar residues over residues 398–408 (NHRNSTFTQEG) and 430–456 (EVFV…SQET). Residue S474 is modified to Phosphoserine. The PDZ domain maps to 517–589 (LIRMKPDENG…DQVVLFIKAS (73 aa)). Residues 655 to 911 (VLTQFDQLYR…RFVCEAILKV (257 aa)) form the Tyrosine-protein phosphatase domain. Residues D820, 852-858 (CSAGIGR), and Q896 contribute to the substrate site. C852 acts as the Phosphocysteine intermediate in catalysis.

This sequence belongs to the protein-tyrosine phosphatase family. Non-receptor class subfamily. Interacts with MAPK12 (via C-terminus); this interaction abolishes PTPN4 catalytic autoinhibition and thus activates the phosphatase activity. As to quaternary structure, (Microbial infection) Interacts with attenuated rabies virus protein G; this interaction is required for virally-induced apoptosis. Highly phosphorylated on serine and threonine residues but not on tyrosines. In terms of processing, cleaved and activated by calpain I/CAPN1.

It localises to the cell membrane. It is found in the cytoplasm. Its subcellular location is the cytoskeleton. The enzyme catalyses O-phospho-L-tyrosyl-[protein] + H2O = L-tyrosyl-[protein] + phosphate. Its function is as follows. Phosphatase that plays a role in immunity, learning, synaptic plasticity or cell homeostasis. Regulates neuronal cell homeostasis by protecting neurons against apoptosis. Negatively regulates TLR4-induced interferon beta production by dephosphorylating adapter TICAM2 and inhibiting subsequent TRAM-TRIF interaction. Also dephosphorylates the immunoreceptor tyrosine-based activation motifs/ITAMs of the TCR zeta subunit and thereby negatively regulates TCR-mediated signaling pathway. May act at junctions between the membrane and the cytoskeleton. The polypeptide is Tyrosine-protein phosphatase non-receptor type 4 (PTPN4) (Homo sapiens (Human)).